A 1190-amino-acid chain; its full sequence is DNA-directed RNA polymerase subunit beta (1190 aa).

This sequence belongs to the RNA polymerase beta chain family. The RNAP catalytic core consists of 2 alpha, 1 beta, 1 beta' and 1 omega subunit. When a sigma factor is associated with the core the holoenzyme is formed, which can initiate transcription.

The enzyme catalyses RNA(n) + a ribonucleoside 5'-triphosphate = RNA(n+1) + diphosphate. Its function is as follows. DNA-dependent RNA polymerase catalyzes the transcription of DNA into RNA using the four ribonucleoside triphosphates as substrates. The chain is DNA-directed RNA polymerase subunit beta from Geobacillus thermodenitrificans (strain NG80-2).